We begin with the raw amino-acid sequence, 906 residues long: Protein translocase subunit SecA (906 aa).

Residues glutamine 87, 105–109 (GEGKT), and aspartate 513 contribute to the ATP site. The interval 860–906 (QVNKGEVVSDENTGDDTFVRNEKKVGRNEPCPCGSGKKYKQCHGKLD) is disordered. Over residues 876–886 (TFVRNEKKVGR) the composition is skewed to basic and acidic residues. 4 residues coordinate Zn(2+): cysteine 890, cysteine 892, cysteine 901, and histidine 902. Residues 896–906 (KKYKQCHGKLD) show a composition bias toward basic residues.

It belongs to the SecA family. As to quaternary structure, monomer and homodimer. Part of the essential Sec protein translocation apparatus which comprises SecA, SecYEG and auxiliary proteins SecDF-YajC and YidC. It depends on Zn(2+) as a cofactor.

The protein resides in the cell inner membrane. The protein localises to the cytoplasm. The enzyme catalyses ATP + H2O + cellular proteinSide 1 = ADP + phosphate + cellular proteinSide 2.. Part of the Sec protein translocase complex. Interacts with the SecYEG preprotein conducting channel. Has a central role in coupling the hydrolysis of ATP to the transfer of proteins into and across the cell membrane, serving both as a receptor for the preprotein-SecB complex and as an ATP-driven molecular motor driving the stepwise translocation of polypeptide chains across the membrane. The polypeptide is Protein translocase subunit SecA (Psychromonas ingrahamii (strain DSM 17664 / CCUG 51855 / 37)).